A 149-amino-acid polypeptide reads, in one-letter code: Globin (149 aa).

One can recognise a Globin domain in the interval 2–149 (VLTKDEFDSL…KIFTGVAGQL (148 aa)). His100 is a binding site for heme.

It belongs to the globin family. Monomer.

Functionally, oxygen binding protein. This is Globin from Isoparorchis hypselobagri (Giant trematode).